The sequence spans 616 residues: Dihydroxy-acid dehydratase (616 aa).

Position 81 (aspartate 81) interacts with Mg(2+). Position 122 (cysteine 122) interacts with [2Fe-2S] cluster. 2 residues coordinate Mg(2+): aspartate 123 and lysine 124. Lysine 124 carries the N6-carboxylysine modification. A [2Fe-2S] cluster-binding site is contributed by cysteine 195. Residue glutamate 491 coordinates Mg(2+). Serine 517 serves as the catalytic Proton acceptor.

This sequence belongs to the IlvD/Edd family. As to quaternary structure, homodimer. [2Fe-2S] cluster is required as a cofactor. The cofactor is Mg(2+).

The enzyme catalyses (2R)-2,3-dihydroxy-3-methylbutanoate = 3-methyl-2-oxobutanoate + H2O. The catalysed reaction is (2R,3R)-2,3-dihydroxy-3-methylpentanoate = (S)-3-methyl-2-oxopentanoate + H2O. The protein operates within amino-acid biosynthesis; L-isoleucine biosynthesis; L-isoleucine from 2-oxobutanoate: step 3/4. It functions in the pathway amino-acid biosynthesis; L-valine biosynthesis; L-valine from pyruvate: step 3/4. Functions in the biosynthesis of branched-chain amino acids. Catalyzes the dehydration of (2R,3R)-2,3-dihydroxy-3-methylpentanoate (2,3-dihydroxy-3-methylvalerate) into 2-oxo-3-methylpentanoate (2-oxo-3-methylvalerate) and of (2R)-2,3-dihydroxy-3-methylbutanoate (2,3-dihydroxyisovalerate) into 2-oxo-3-methylbutanoate (2-oxoisovalerate), the penultimate precursor to L-isoleucine and L-valine, respectively. This Escherichia coli O9:H4 (strain HS) protein is Dihydroxy-acid dehydratase.